The primary structure comprises 147 residues: MGHFTEEDKATITSLWGKLNVEDAGGETLGRLLLVYPWTQRFFDSFGNLSSASAIMGNPKVKAHGKKVLTSLGDAVKNLDDLKGTFAQLSELHCDKLHVDPENFRLLGNVLVTVLAIHFGKEFTPEVQASWQKMVTGVASALSSRYH.

Positions 3-147 (HFTEEDKATI…VASALSSRYH (145 aa)) constitute a Globin domain. Threonine 13 carries the post-translational modification Phosphothreonine. Phosphoserine is present on residues serine 45, serine 51, and serine 53. Lysine 60 is subject to N6-acetyllysine. Histidine 64 provides a ligand contact to heme b. Lysine 83 carries the post-translational modification N6-acetyllysine. Histidine 93 provides a ligand contact to heme b. At cysteine 94 the chain carries S-nitrosocysteine. Residues serine 140, serine 143, and serine 144 each carry the phosphoserine modification.

This sequence belongs to the globin family. In terms of assembly, heterotetramer of two alpha chains and two gamma chains in fetal hemoglobin (Hb F). Red blood cells.

In terms of biological role, gamma chains make up the fetal hemoglobin F, in combination with alpha chains. This is Hemoglobin subunit gamma-2 (HBG2) from Pongo pygmaeus (Bornean orangutan).